The chain runs to 243 residues: 1-(5-phosphoribosyl)-5-[(5-phosphoribosylamino)methylideneamino] imidazole-4-carboxamide isomerase (243 aa).

The active-site Proton acceptor is aspartate 8. Aspartate 130 serves as the catalytic Proton donor.

This sequence belongs to the HisA/HisF family.

The protein localises to the cytoplasm. The catalysed reaction is 1-(5-phospho-beta-D-ribosyl)-5-[(5-phospho-beta-D-ribosylamino)methylideneamino]imidazole-4-carboxamide = 5-[(5-phospho-1-deoxy-D-ribulos-1-ylimino)methylamino]-1-(5-phospho-beta-D-ribosyl)imidazole-4-carboxamide. Its pathway is amino-acid biosynthesis; L-histidine biosynthesis; L-histidine from 5-phospho-alpha-D-ribose 1-diphosphate: step 4/9. In Acinetobacter baylyi (strain ATCC 33305 / BD413 / ADP1), this protein is 1-(5-phosphoribosyl)-5-[(5-phosphoribosylamino)methylideneamino] imidazole-4-carboxamide isomerase.